A 41-amino-acid chain; its full sequence is Large ribosomal subunit protein bL36 (41 aa).

It belongs to the bacterial ribosomal protein bL36 family.

This Dinoroseobacter shibae (strain DSM 16493 / NCIMB 14021 / DFL 12) protein is Large ribosomal subunit protein bL36.